A 1139-amino-acid chain; its full sequence is Liprin-alpha (1139 aa).

4 coiled-coil regions span residues 30–144 (PSDR…SLRM), 172–298 (EHHK…KNQI), 329–517 (IRDL…AQFQ), and 655–701 (QDAQ…EFYD). 2 disordered regions span residues 700-720 (YDDQGISTRSSPRASPQLDNM) and 764-847 (NQFD…DRRK). Polar residues-rich tracts occupy residues 704-719 (GISTRSSPRASPQLDN) and 778-787 (PASSVASSTD). SAM domains are found at residues 867-933 (WNGP…MVSL), 952-1016 (NHEY…LKKV), and 1040-1109 (WSNE…LVND).

It belongs to the liprin family. Liprin-alpha subfamily. As to expression, detected in vulval muscle and other cells near the vulva; in neurons located in the lateral ganglion, posterior ganglion, ventral cord and lateral body; and in pharyngeal and body wall muscle cells.

The protein resides in the synapse. May play a role in regulating the structure of the neuronal region, called the active zone, from which synaptic vesicles send neurotransmitter signals across the synapse. This may be in association with the liprin-beta protein hlb-1. This chain is Liprin-alpha, found in Caenorhabditis elegans.